The primary structure comprises 548 residues: Natural resistance-associated macrophage protein 1 (548 aa).

Residues 1–11 (MSGDTGPSKQG) show a composition bias toward polar residues. Residues 1 to 38 (MSGDTGPSKQGGTRYGSISSPPSPGPQQAPPGGTYLGE) are disordered. Over 1–55 (MSGDTGPSKQGGTRYGSISSPPSPGPQQAPPGGTYLGEKIPIPDTESGAFSLRKL) the chain is Cytoplasmic. A helical transmembrane segment spans residues 56 to 73 (WAFTGPGFLMSIAFLDPG). The Extracellular portion of the chain corresponds to 74–82 (NIESDLQAG). Residues 83 to 102 (AVAGFKLLWVLLWATVLGLL) traverse the membrane as a helical segment. Over 103–139 (CQRLAARLGVVTGKDLGEVCHLYYPKVPRILLWLTIE) the chain is Cytoplasmic. The helical transmembrane segment at 140–160 (LAIVGSDMQEVIGTAIAFSLL) threads the bilayer. At 161-164 (SAGR) the chain is on the extracellular side. The chain crosses the membrane as a helical span at residues 165–184 (IPLWGGVLITVVDTFFFLFL). Residues 185–193 (DNYGLRKLE) are Cytoplasmic-facing. Residues 194-214 (AFFGFLITIMALTFGYEYVVA) form a helical membrane-spanning segment. At 215–237 (QPAQGALLQGLFLPSCRGCGQPE) the chain is on the extracellular side. Residues 238–256 (LLQAVGIIGAIIMPHNIYL) form a helical membrane-spanning segment. At 257 to 284 (HSSLVKSREVDRSRRADIREANMYFLIE) the chain is on the cytoplasmic side. The chain crosses the membrane as a helical span at residues 285-304 (ATIALSVSFLINLFVMAVFG). Residues 305 to 346 (QAFYKQTNQAAFNICAKSSLHDYAPIFPRNNLTVAVDIYQGG) lie on the Extracellular side of the membrane. Asn335 carries an N-linked (GlcNAc...) asparagine glycan. Residues 347 to 366 (VILGCLFGPAALYIWAVGLL) form a helical membrane-spanning segment. Residues 367 to 397 (AAGQSSTMTGTYAGQFVMEGFLKLRWSRFAR) lie on the Cytoplasmic side of the membrane. Residues 398–415 (VLLTRSCAILPTVLLAVF) traverse the membrane as a helical segment. The Extracellular portion of the chain corresponds to 416–426 (RDLRDLSGLND). A helical membrane pass occupies residues 427–447 (LLNVLQSLLLPFAVLPILTFT). The Cytoplasmic portion of the chain corresponds to 448 to 463 (SMPALMQEFANGLVSK). A helical membrane pass occupies residues 464-485 (VITSSIMVLVCAVNLYFVISYV). The Extracellular portion of the chain corresponds to 486–493 (PSLPHPAY). A helical membrane pass occupies residues 494–513 (FSLVALLAAAYLGLTTYLVW). The Cytoplasmic portion of the chain corresponds to 514–548 (TCLITQGATFLAHNSHQRFLYGLPEEDQEKGRTSG).

This sequence belongs to the NRAMP family.

It is found in the late endosome membrane. The protein localises to the lysosome membrane. The enzyme catalyses Zn(2+)(in) + H(+)(out) = Zn(2+)(out) + H(+)(in). It catalyses the reaction Fe(2+)(in) + H(+)(out) = Fe(2+)(out) + H(+)(in). It carries out the reaction Mn(2+)(in) + H(+)(out) = Mn(2+)(out) + H(+)(in). Macrophage-specific antiporter that fluxes metal ions in either direction against a proton gradient. Localized to late endosomal lysosomal membranes, delivers bivalent cations from the cytosol into these acidic compartments where they may directly affect antimicrobial activity. Involved in iron metabolism and host natural resistance to infection with intracellular parasites. Pathogen resistance involves sequestration of Fe(2+) and Mn(2+), cofactors of both prokaryotic and eukaryotic catalases and superoxide dismutases, not only to protect the macrophage against its own generation of reactive oxygen species, but to deny the cations to the pathogen for synthesis of its protective enzymes. The sequence is that of Natural resistance-associated macrophage protein 1 (SLC11A1) from Bubalus bubalis (Domestic water buffalo).